We begin with the raw amino-acid sequence, 176 residues long: ATP synthase subunit delta (176 aa).

It belongs to the ATPase delta chain family. F-type ATPases have 2 components, F(1) - the catalytic core - and F(0) - the membrane proton channel. F(1) has five subunits: alpha(3), beta(3), gamma(1), delta(1), epsilon(1). F(0) has three main subunits: a(1), b(2) and c(10-14). The alpha and beta chains form an alternating ring which encloses part of the gamma chain. F(1) is attached to F(0) by a central stalk formed by the gamma and epsilon chains, while a peripheral stalk is formed by the delta and b chains.

It is found in the cell inner membrane. F(1)F(0) ATP synthase produces ATP from ADP in the presence of a proton or sodium gradient. F-type ATPases consist of two structural domains, F(1) containing the extramembraneous catalytic core and F(0) containing the membrane proton channel, linked together by a central stalk and a peripheral stalk. During catalysis, ATP synthesis in the catalytic domain of F(1) is coupled via a rotary mechanism of the central stalk subunits to proton translocation. Its function is as follows. This protein is part of the stalk that links CF(0) to CF(1). It either transmits conformational changes from CF(0) to CF(1) or is implicated in proton conduction. This chain is ATP synthase subunit delta, found in Campylobacter curvus (strain 525.92).